The following is a 614-amino-acid chain: Polyamine transporter 2 (614 aa).

Residues 1 to 40 (MSDQESVVSFNSQNTSMVDVEGQQPQQYVPSKTNSRANQL) form a disordered region. Residues 1 to 173 (MSDQESVVSF…WPSWVRWSYT (173 aa)) are Cytoplasmic-facing. A Phosphoserine modification is found at S50. A compositionally biased stretch (polar residues) spans 99 to 122 (RTASALSRTRTKQLNRTATNSSST). The interval 99–144 (RTASALSRTRTKQLNRTATNSSSTGKEEMEEEETEEREDQSGENEL) is disordered. Positions 126 to 144 (EMEEEETEEREDQSGENEL) are enriched in acidic residues. The chain crosses the membrane as a helical span at residues 174–194 (VLLSILVICVAYGSACISGGL). The Extracellular segment spans residues 195-206 (GTVEKKYHVGME). Residues 207–227 (AAILSCSLMVIGFSLGPLIWS) traverse the membrane as a helical segment. At 228–236 (PVSDLYGRR) the chain is on the cytoplasmic side. The chain crosses the membrane as a helical span at residues 237–257 (VAYFVSMGLYVIFNIPCALAP). Over 258–266 (NLGCLLACR) the chain is Extracellular. The chain crosses the membrane as a helical span at residues 267-287 (FLCGVWSSSGLCLVGGSIADM). Topologically, residues 288–297 (FPSETRGKAI) are cytoplasmic. Residues 298 to 318 (AFFAFAPYVGPVVGPLVNGFI) form a helical membrane-spanning segment. Residues 319–326 (SVSTGRMD) are Extracellular-facing. A helical membrane pass occupies residues 327 to 347 (LIFWVNMAFAGVMWIISSAIP). Residues 348–407 (ETYAPVILKRKAARLRKETGNPKIMTEQEAQGVSMSEMMRACLLRPLYFAVTEPVLVATC) lie on the Cytoplasmic side of the membrane. Residues 408–428 (FYVCLIYSLLYAFFFAFPVIF) form a helical membrane-spanning segment. Topologically, residues 429–437 (GELYGYKDN) are extracellular. The chain crosses the membrane as a helical span at residues 438-458 (LVGLMFIPIVIGALWALATTF). Residues 459–478 (YCENKYLQIVKQRKPTPEDR) lie on the Cytoplasmic side of the membrane. A helical transmembrane segment spans residues 479-499 (LLGAKIGAPFAAIALWILGAT). The Extracellular portion of the chain corresponds to 500–503 (AYKH). A helical membrane pass occupies residues 504 to 524 (IIWVGPASAGLAFGFGMVLIY). At 525–541 (YSLNNYIIDCYVQYASS) the chain is on the cytoplasmic side. Residues 542–562 (ALATKVFLRSAGGAAFPLFTI) form a helical membrane-spanning segment. At 563-574 (QMYHKLNLHWGS) the chain is on the extracellular side. A helical membrane pass occupies residues 575–595 (WLLAFISTAMIALPFAFSYWG). Topologically, residues 596–614 (KGLRHKLSKKDYSIDSVEM) are cytoplasmic.

The protein belongs to the major facilitator superfamily. DHA1 family. Polyamines/proton antiporter (TC 2.A.1.2.16) subfamily.

Its subcellular location is the cell membrane. Cell membrane polyamine/proton antiporter, involved in the detoxification of excess polyamines in the cytoplasm. Recognizes spermine, but not spermidine. The protein is Polyamine transporter 2 (TPO2) of Saccharomyces cerevisiae (strain ATCC 204508 / S288c) (Baker's yeast).